Reading from the N-terminus, the 311-residue chain is Pyrimidine-specific ribonucleoside hydrolase RihA (311 aa).

Residue His240 is part of the active site.

This sequence belongs to the IUNH family. RihA subfamily.

Hydrolyzes cytidine or uridine to ribose and cytosine or uracil, respectively. This Salmonella schwarzengrund (strain CVM19633) protein is Pyrimidine-specific ribonucleoside hydrolase RihA.